Reading from the N-terminus, the 386-residue chain is Tumor necrosis factor receptor superfamily member 10D (386 aa).

Disordered stretches follow at residues 1–25 and 62–90; these read MGLW…ARTA and DEVP…SHRS. The first 55 residues, 1–55, serve as a signal peptide directing secretion; sequence MGLWGQSVPTASSARAGRYPGARTASGTRPWLLDPKILKFVVFIVAVLLPVRVDS. At 56–211 the chain is on the extracellular side; it reads ATIPRQDEVP…ILGMLASPYH (156 aa). TNFR-Cys repeat units follow at residues 58-97, 98-139, and 140-180; these read IPRQ…GACN, PCTE…DTVC, and QCEK…DIKC. The span at 64-75 shows a compositional bias: polar residues; it reads VPQQTVAPQQQR. Disulfide bonds link C83/C96, C99/C115, C118/C131, C121/C139, C141/C155, C158/C172, and C162/C180. N-linked (GlcNAc...) asparagine glycosylation occurs at N127. N182 carries an N-linked (GlcNAc...) asparagine glycan. Residues 212–232 traverse the membrane as a helical segment; sequence YLIIIVVLVIILAVVVVGFSC. At 233 to 386 the chain is on the cytoplasmic side; the sequence is RKKFISYLKG…DEAGSATSCL (154 aa). Residues 340–366 form the Death; truncated domain; sequence SADISTLLDASATLEEGHAKETIQDQL.

In terms of tissue distribution, widely expressed, in particular in fetal kidney, lung and liver, and in adult testis and liver. Also expressed in peripheral blood leukocytes, colon and small intestine, ovary, prostate, thymus, spleen, pancreas, kidney, lung, placenta and heart.

The protein resides in the membrane. Its function is as follows. Receptor for the cytotoxic ligand TRAIL. Contains a truncated death domain and hence is not capable of inducing apoptosis but protects against TRAIL-mediated apoptosis. Reports are contradictory with regards to its ability to induce the NF-kappa-B pathway. According to PubMed:9382840, it cannot but according to PubMed:9430226, it can induce the NF-kappa-B pathway. This chain is Tumor necrosis factor receptor superfamily member 10D, found in Homo sapiens (Human).